The sequence spans 160 residues: MFPLCRLLACRAQVPSHLVRYLSDSQPPFCIQRLDHLVLTVRSLDRTINFYTKVLGMEATTFKGGRKALSFGMQKINLHEAGKEFEPKASVPSPGSADLCLITETPLSTVVQHLKACGVPVEEGPVSRTGAVGEIISVYMRDPDQNLIEVSNYESDIKKK.

Residues 33–153 (RLDHLVLTVR…DQNLIEVSNY (121 aa)) form the VOC domain.

It belongs to the glyoxalase I family.

This Xenopus tropicalis (Western clawed frog) protein is Glyoxalase domain-containing protein 5 (glod5).